Reading from the N-terminus, the 420-residue chain is Odorant receptor 63a (420 aa).

The Cytoplasmic segment spans residues 1 to 43 (MYSPEEAAELKRRNYRSIREMIRLSYTVGFNLLDPSRCGQVLR). Residues 44–64 (IWTIVLSVSSLASLYGHWQML) form a helical membrane-spanning segment. Residues 65–76 (ARYIHDIPRIGE) lie on the Extracellular side of the membrane. A helical membrane pass occupies residues 77-97 (TAGTALQFLTSIAKMWYFLFA). The Cytoplasmic portion of the chain corresponds to 98 to 150 (HRQIYELLRKARCHELLQKCELFERMSDLPVIKEIRQQVESTMNRYWASTRRQ). Residues 151 to 171 (ILIYLYSCICITTNYFINSFV) form a helical membrane-spanning segment. At 172–217 (INLYRYFTKPKGSYDIMLPLPSLYPAWEHKGLEFPYYHIQMYLETC) the chain is on the extracellular side. A helical transmembrane segment spans residues 218 to 238 (SLYICGMCAVSFDGVFIVLCL). Residues 239-296 (HSVGLMRSLNQMVEQATSELVPPDRRVEYLRCCIYQYQRVANFATEVNNCFRHITFTQ) lie on the Cytoplasmic side of the membrane. The chain crosses the membrane as a helical span at residues 297 to 317 (FLLSLFNWGLALFQMSVGLGN). N-linked (GlcNAc...) asparagine glycosylation is present at N318. Topologically, residues 318 to 320 (NSS) are extracellular. A helical transmembrane segment spans residues 321 to 341 (ITMIRMTMYLVAAGYQIVVYC). Topologically, residues 342–387 (YNGQRFATASEEIANAFYQVRWYGESREFRHLIRMMLMRTNRGFRL) are cytoplasmic. The helical transmembrane segment at 388–408 (DVSWFMQMSLPTLMAMVRTSG) threads the bilayer. The Extracellular portion of the chain corresponds to 409–420 (QYFLLLQNVNQK).

This sequence belongs to the insect chemoreceptor superfamily. Heteromeric odorant receptor channel (TC 1.A.69) family. Or63a subfamily. In terms of assembly, interacts with Orco. Complexes exist early in the endomembrane system in olfactory sensory neurons (OSNs), coupling these complexes to the conserved ciliary trafficking pathway.

The protein localises to the cell membrane. In terms of biological role, odorant receptor which mediates acceptance or avoidance behavior, depending on its substrates. The odorant receptor repertoire encodes a large collection of odor stimuli that vary widely in identity, intensity, and duration. May form a complex with Orco to form odorant-sensing units, providing sensitive and prolonged odorant signaling and calcium permeability. Involved in the behavioral responses to butyl acetate, isoamyl acetate, and hexanoic acid. The chain is Odorant receptor 63a (Or63a) from Drosophila melanogaster (Fruit fly).